The sequence spans 31 residues: Branched-chain-amino-acid aminotransferase, mitochondrial (31 aa).

Residues 1–27 (MAAAALRQIWARKFLPVPWLLCGPRRY) constitute a mitochondrion transit peptide.

The protein belongs to the class-IV pyridoxal-phosphate-dependent aminotransferase family. Homodimer. It depends on pyridoxal 5'-phosphate as a cofactor.

It is found in the mitochondrion. It catalyses the reaction L-leucine + 2-oxoglutarate = 4-methyl-2-oxopentanoate + L-glutamate. The enzyme catalyses L-isoleucine + 2-oxoglutarate = (S)-3-methyl-2-oxopentanoate + L-glutamate. It carries out the reaction L-valine + 2-oxoglutarate = 3-methyl-2-oxobutanoate + L-glutamate. In terms of biological role, catalyzes the first reaction in the catabolism of the essential branched chain amino acids leucine, isoleucine, and valine. May also function as a transporter of branched chain alpha-keto acids. The polypeptide is Branched-chain-amino-acid aminotransferase, mitochondrial (BCAT2) (Sus scrofa (Pig)).